The primary structure comprises 729 residues: Probable ATP-dependent RNA helicase DDX17 (729 aa).

The segment at 20–115 (EAATVASATG…PPKKFGNPGE (96 aa)) is disordered. Ser64 carries the phosphoserine modification. Residues 86–95 (GDRDRDRDRG) are compositionally biased toward basic and acidic residues. Over residues 96-105 (GFGARGGGGL) the composition is skewed to gly residues. 3 positions are modified to N6-acetyllysine; by EP300: Lys108, Lys109, and Lys121. Lys129 is covalently cross-linked (Glycyl lysine isopeptide (Lys-Gly) (interchain with G-Cter in SUMO); alternate). Residue Lys129 forms a Glycyl lysine isopeptide (Lys-Gly) (interchain with G-Cter in SUMO1); alternate linkage. Residue Lys129 forms a Glycyl lysine isopeptide (Lys-Gly) (interchain with G-Cter in SUMO2); alternate linkage. The short motif at 171–199 (FAFHHANFPQYVMDVLMDQHFTEPTPIQC) is the Q motif element. The Helicase ATP-binding domain occupies 202-377 (FPLALSGRDM…EDFLRDYTQI (176 aa)). Residue 215 to 222 (AQTGSGKT) participates in ATP binding. A DEAD box motif is present at residues 325–328 (DEAD). The 148-residue stretch at 405-552 (KLIQLMEEIM…AINPKLMQLV (148 aa)) folds into the Helicase C-terminal domain. Thr523 carries the phosphothreonine modification. A Glycyl lysine isopeptide (Lys-Gly) (interchain with G-Cter in SUMO2) cross-link involves residue Lys528. The tract at residues 547-729 (KLMQLVDHRG…PPPPPPPSRK (183 aa)) is transactivation domain. Disordered stretches follow at residues 551-623 (LVDH…GSPN) and 659-729 (TYGA…PSRK). A compositionally biased stretch (polar residues) spans 568 to 578 (RTTSSANNPNL). Residues 583–610 (ECDRRLRGVKDGGRRDSASYRDRSETDR) are compositionally biased toward basic and acidic residues. The segment covering 659 to 688 (TYGASSTTSTGRSSQSSSQQFSGIGRSGQQ) has biased composition (low complexity). Arg684 carries the post-translational modification Omega-N-methylarginine. The segment covering 689–698 (PQPLMSQQFA) has biased composition (polar residues). Residues 717–729 (YPPPPPPPPPSRK) show a composition bias toward pro residues. An interaction with YAP1 region spans residues 718-726 (PPPPPPPPP).

Belongs to the DEAD box helicase family. DDX5/DBP2 subfamily. As to quaternary structure, interacts with DDX5 in an RNA-independent manner. Interacts with CDK9 transcription elongation complex under basal conditions. Following cell stimulation with poly(I:C), a synthetic double-stranded RNA mimicking viral infection, the interaction with CDK9 is decreased. Interacts with ESR1 in an estrogen-independent manner. Interacts with HNRNPH1; this interaction is important for the regulation of alternative splicing on G-quadruplex structures. At high, but not low, cell density, interacts with DROSHA and DGCR8, the core components of the microprocessor complex involved in the maturation of primary microRNAs (pri-miRNAs) into pre-miRNAs. The interaction with DGCR8 is reduced during mitosis. At low, but not high, cell density, interacts with YAP1 and with its paralog, WWTR1/TAZ. Interactions with DROSHA and YAP1 are mutually exclusive. In vitro, the pre-miRNA processing activity of the DDX17-containing microprocessor complex is weaker than that of the DROSHA/DGCR8 microprocessor complex devoid of DDX17. Interacts with UPF3B. Interacts with NFAT5; this interaction leads to DDX17 recruitment to LNC2 and S100A4 promoters and NFAT5-mediated DDX17-enhanced transactivation. Interacts with HDAC1, HDAC2 and HDAC3; this interaction with HDAC1 and HDAC3, but not HDAC2, depends upon DDX17 acetylation. Interacts with ZC3HAV1 (via N-terminal domain) in an RNA-independent manner. Interacts with EXOSC3/RRP40 and EXOSC5/RRP46; this interaction may be indirect and mediated by ZC3HAV1-binding. Interacts with EP300; this interaction leads to acetylation at lysine residues. Interacts with CREBBP/CBP and KAT2B/P/CAF. Directly interacts with CTNNB1. Interacts with MYOD1. Interacts with TP53. Interacts with DCP1A in an RNA-independent manner. Interacts with DCP2 in an RNA-dependent manner. Interacts with DHX36; this interaction occurs in a RNA-dependent manner. Interacts with ERCC6. In terms of processing, sumoylation significantly increases stability. It also promotes interaction specifically with HDAC1 (but not HDAC2, nor HDAC3) and strongly stimulates ESR1 and TP53 coactivation. Acetylation at lysine residues stabilizes the protein, stimulates interaction with HDAC1 and HDAC3, but not HDAC2, and represses ESR1 and TP53 coactivation activity. In terms of tissue distribution, widely expressed. Low expression, if any, in normal colonic epithelial cells (at protein level). Levels tend to increase during colon cancer progression, from very low in benign hyperplastic polyps to very high in tubular and villous adenomas.

The protein resides in the nucleus. It localises to the nucleolus. Its subcellular location is the cytoplasm. It is found in the cytosol. The enzyme catalyses ATP + H2O = ADP + phosphate + H(+). Functionally, as an RNA helicase, unwinds RNA and alters RNA structures through ATP binding and hydrolysis. Involved in multiple cellular processes, including pre-mRNA splicing, alternative splicing, ribosomal RNA processing and miRNA processing, as well as transcription regulation. Regulates the alternative splicing of exons exhibiting specific features. For instance, promotes the inclusion of AC-rich alternative exons in CD44 transcripts. This function requires the RNA helicase activity. Affects NFAT5 and histone macro-H2A.1/MACROH2A1 alternative splicing in a CDK9-dependent manner. In NFAT5, promotes the introduction of alternative exon 4, which contains 2 stop codons and may target NFAT5 exon 4-containing transcripts to nonsense-mediated mRNA decay, leading to the down-regulation of NFAT5 protein. Affects splicing of mediators of steroid hormone signaling pathway, including kinases that phosphorylates ESR1, such as CDK2, MAPK1 and GSK3B, and transcriptional regulators, such as CREBBP, MED1, NCOR1 and NCOR2. By affecting GSK3B splicing, participates in ESR1 and AR stabilization. In myoblasts and epithelial cells, cooperates with HNRNPH1 to control the splicing of specific subsets of exons. In addition to binding mature mRNAs, also interacts with certain pri-microRNAs, including MIR663/miR-663a, MIR99B/miR-99b, and MIR6087/miR-6087. Binds pri-microRNAs on the 3' segment flanking the stem loop via the 5'-[ACG]CAUC[ACU]-3' consensus sequence. Required for the production of subsets of microRNAs, including MIR21 and MIR125B1. May be involved not only in microRNA primary transcript processing, but also stabilization. Participates in MYC down-regulation at high cell density through the production of MYC-targeting microRNAs. Along with DDX5, may be involved in the processing of the 32S intermediate into the mature 28S ribosomal RNA. Promoter-specific transcription regulator, functioning as a coactivator or corepressor depending on the context of the promoter and the transcriptional complex in which it exists. Enhances NFAT5 transcriptional activity. Synergizes with TP53 in the activation of the MDM2 promoter; this activity requires acetylation on lysine residues. May also coactivate MDM2 transcription through a TP53-independent pathway. Coactivates MMP7 transcription. Along with CTNNB1, coactivates MYC, JUN, FOSL1 and cyclin D1/CCND1 transcription. Alone or in combination with DDX5 and/or SRA1 non-coding RNA, plays a critical role in promoting the assembly of proteins required for the formation of the transcription initiation complex and chromatin remodeling leading to coactivation of MYOD1-dependent transcription. This helicase-independent activity is required for skeletal muscle cells to properly differentiate into myotubes. During epithelial-to-mesenchymal transition, coregulates SMAD-dependent transcriptional activity, directly controlling key effectors of differentiation, including miRNAs which in turn directly repress its expression. Plays a role in estrogen and testosterone signaling pathway at several levels. Mediates the use of alternative promoters in estrogen-responsive genes and regulates transcription and splicing of a large number of steroid hormone target genes. Contrary to splicing regulation activity, transcriptional coregulation of the estrogen receptor ESR1 is helicase-independent. Plays a role in innate immunity. Specifically restricts bunyavirus infection, including Rift Valley fever virus (RVFV) or La Crosse virus (LACV), but not vesicular stomatitis virus (VSV), in an interferon- and DROSHA-independent manner. Binds to RVFV RNA, likely via structured viral RNA elements. Promotes mRNA degradation mediated by the antiviral zinc-finger protein ZC3HAV1, in an ATPase-dependent manner. The protein is Probable ATP-dependent RNA helicase DDX17 (DDX17) of Homo sapiens (Human).